A 131-amino-acid chain; its full sequence is Small ribosomal subunit protein bS6 (131 aa).

Residues 96-131 form a disordered region; it reads ITEASPMAKAKDERDSRRGPAGDRSYDEANAEEIAE. Over residues 104–122 the composition is skewed to basic and acidic residues; it reads KAKDERDSRRGPAGDRSYD.

It belongs to the bacterial ribosomal protein bS6 family.

Functionally, binds together with bS18 to 16S ribosomal RNA. The protein is Small ribosomal subunit protein bS6 of Shewanella oneidensis (strain ATCC 700550 / JCM 31522 / CIP 106686 / LMG 19005 / NCIMB 14063 / MR-1).